Here is a 208-residue protein sequence, read N- to C-terminus: Pectinesterase inhibitor 6 (208 aa).

Positions 1-30 (MTSSSSSPITFTLLLLLSLLVALNPNPSLA) are cleaved as a signal peptide. Cysteine 53 and cysteine 62 are disulfide-bonded. Residues asparagine 54 and asparagine 75 are each glycosylated (N-linked (GlcNAc...) asparagine). Cysteine 118 and cysteine 165 are disulfide-bonded.

This sequence belongs to the PMEI family.

The protein resides in the secreted. It localises to the extracellular space. Its subcellular location is the apoplast. Functionally, pectin methylesterase (PME) inhibitor that targets PME from seeds and modulates PME activity and pectin methylesterification during seed germination. Promotes mucilage release by limiting methylesterification of homogalacturonan in seed coat epidermal cells. The polypeptide is Pectinesterase inhibitor 6 (Arabidopsis thaliana (Mouse-ear cress)).